Here is a 322-residue protein sequence, read N- to C-terminus: uncharacterized protein (322 aa).

Residues Q205–Q286 adopt a coiled-coil conformation. Basic and acidic residues-rich tracts occupy residues E254 to I281 and D290 to R299. The tract at residues E254–F322 is disordered. Positions S310–F322 are enriched in polar residues.

It to B.subtilis XkdF.

This is an uncharacterized protein from Bacillus subtilis (strain 168).